The following is a 116-amino-acid chain: Ribosome-binding factor A (116 aa).

It belongs to the RbfA family. As to quaternary structure, monomer. Binds 30S ribosomal subunits, but not 50S ribosomal subunits or 70S ribosomes.

The protein localises to the cytoplasm. In terms of biological role, one of several proteins that assist in the late maturation steps of the functional core of the 30S ribosomal subunit. Associates with free 30S ribosomal subunits (but not with 30S subunits that are part of 70S ribosomes or polysomes). Required for efficient processing of 16S rRNA. May interact with the 5'-terminal helix region of 16S rRNA. The polypeptide is Ribosome-binding factor A (Streptococcus mutans serotype c (strain ATCC 700610 / UA159)).